The primary structure comprises 230 residues: Sodium channel modifier 1 (230 aa).

Ser2 carries the post-translational modification Phosphoserine. Positions 4–20 (KREGDDWSQLNVLKKRR) match the Bipartite nuclear localization signal motif. The Matrin-type zinc-finger motif lies at 42 to 74 (FACAICPHRPVLDTLAMLTAHRAGKKHLSSLQL). A Glycyl lysine isopeptide (Lys-Gly) (interchain with G-Cter in SUMO2) cross-link involves residue Lys67. 3 disordered regions span residues 76–106 (YGKK…EAPL), 129–186 (RRKY…SPTR), and 200–230 (GWIP…LPLD). Over residues 81 to 102 (PGKERKQNPKHQNELRREETKA) the composition is skewed to basic and acidic residues. Phosphoserine is present on Ser144. The segment covering 164-174 (PAAGPQAEESA) has biased composition (low complexity). Residue Ser183 is modified to Phosphoserine. A required for interaction with LUC7L2 region spans residues 188-230 (RALDHYLTLRSSGWIPDGRGRWVKDENVEFDSDEEEPPDLPLD). Over residues 205 to 214 (GRGRWVKDEN) the composition is skewed to basic and acidic residues. Positions 215–230 (VEFDSDEEEPPDLPLD) are enriched in acidic residues. A Phosphoserine modification is found at Ser219.

As to quaternary structure, component of the minor spliceosome, which splices U12-type introns. Within this complex, interacts with RNF113A, as well as with SF3B1/SF3b155, SF3B2/SF3b145, SF3B3/SF3b130 and CDC5L. May interact with LUC7L2 and SNRNP70.

Its subcellular location is the nucleus. The protein localises to the nucleoplasm. The protein resides in the nucleus speckle. Its function is as follows. As a component of the minor spliceosome, involved in the splicing of U12-type introns in pre-mRNAs. Plays a role in the regulation of primary cilia length and Hedgehog signaling. This chain is Sodium channel modifier 1 (SCNM1), found in Homo sapiens (Human).